The following is a 31-amino-acid chain: MLVFQMRYQMRYVDKTSTVLKQTKKSDYADK.

In terms of biological role, this peptide is involved in the control mechanism of the synthesis of the erythromycin resistance protein. The protein is 23S rRNA methylase leader peptide (ermC) of Escherichia coli.